We begin with the raw amino-acid sequence, 268 residues long: Interleukin-1 beta (268 aa).

A propeptide spanning residues 1-116 is cleaved from the precursor; it reads MATVPELTSE…TWDDYSLECD (116 aa).

Belongs to the IL-1 family. As to quaternary structure, monomer. In its precursor form, weakly interacts with full-length MEFV; the mature cytokine does not interact at all. Interacts with integrins ITGAV:ITGBV and ITGA5:ITGB1; integrin-binding is required for IL1B signaling. Interacts with cargo receptor TMED10; the interaction is direct and is required for the secretion of IL1B mature form. Interacts with HSP90AB1; the interaction facilitates cargo translocation into the ERGIC. Interacts with HSP90B1; the interaction facilitates cargo translocation into the ERGIC.

Its subcellular location is the cytoplasm. It localises to the cytosol. The protein resides in the secreted. It is found in the lysosome. The protein localises to the extracellular exosome. Its function is as follows. Potent pro-inflammatory cytokine. Initially discovered as the major endogenous pyrogen, induces prostaglandin synthesis, neutrophil influx and activation, T-cell activation and cytokine production, B-cell activation and antibody production, and fibroblast proliferation and collagen production. Promotes Th17 differentiation of T-cells. Synergizes with IL12/interleukin-12 to induce IFNG synthesis from T-helper 1 (Th1) cells. Plays a role in angiogenesis by inducing VEGF production synergistically with TNF and IL6. Involved in transduction of inflammation downstream of pyroptosis: its mature form is specifically released in the extracellular milieu by passing through the gasdermin-D (GSDMD) pore. The sequence is that of Interleukin-1 beta (IL1B) from Oryctolagus cuniculus (Rabbit).